Reading from the N-terminus, the 508-residue chain is Phenylalanine--tRNA ligase alpha subunit (508 aa).

Ala2 bears the N-acetylalanine mark. A phosphoserine mark is found at Ser193 and Ser301. Lys311 carries the N6-acetyllysine modification. Residues Thr329, 372 to 374 (QIE), and Tyr412 contribute to the L-phenylalanine site. Residue Glu414 coordinates Mg(2+). Phe438 is a binding site for L-phenylalanine.

The protein belongs to the class-II aminoacyl-tRNA synthetase family. Phe-tRNA synthetase alpha subunit type 2 subfamily. Heterotetramer; dimer of two heterodimers formed by FARSA and FARSB. Requires Mg(2+) as cofactor.

It localises to the cytoplasm. It catalyses the reaction tRNA(Phe) + L-phenylalanine + ATP = L-phenylalanyl-tRNA(Phe) + AMP + diphosphate + H(+). This chain is Phenylalanine--tRNA ligase alpha subunit (Farsa), found in Mus musculus (Mouse).